Consider the following 187-residue polypeptide: Large ribosomal subunit protein uL6 (187 aa).

Residues 159-187 (PYKGKGIRYKGEQLSSNPERLQVRSKEVR) form a disordered region.

This sequence belongs to the universal ribosomal protein uL6 family. Part of the 50S ribosomal subunit.

This protein binds to the 23S rRNA, and is important in its secondary structure. It is located near the subunit interface in the base of the L7/L12 stalk, and near the tRNA binding site of the peptidyltransferase center. This Aquifex pyrophilus protein is Large ribosomal subunit protein uL6.